A 1449-amino-acid polypeptide reads, in one-letter code: Gag-Pol polyprotein (1449 aa).

Gly2 carries the N-myristoyl glycine; by host lipid modification. The Nuclear export signal motif lies at 16–22 (LEKIRLR). The Nuclear localization signal motif lies at 26–32 (KKRYQLK). 2 consecutive CCHC-type zinc fingers follow at residues 392–409 (IKCW…QCRA) and 413–430 (QGCW…KCPE). The segment at 442–494 (GKEAPQFPHGPDASGADTNCSPRGSSCGSTEELHEDGQKAEGEQRETLQGGNG) is disordered. A compositionally biased stretch (polar residues) spans 457 to 470 (ADTNCSPRGSSCGS). The span at 472 to 487 (EELHEDGQKAEGEQRE) shows a compositional bias: basic and acidic residues. The Peptidase A2 domain occupies 518–587 (VEVLLDTGAD…TPINIFGRNL (70 aa)). Residue Asp523 is the For protease activity; shared with dimeric partner of the active site. A Reverse transcriptase domain is found at 641–831 (DGQLEEAPPT…PPFQWMGYEL (191 aa)). Mg(2+) contacts are provided by Asp707, Asp782, and Asp783. The RT 'primer grip' stretch occupies residues 824 to 832 (FQWMGYELW). The Tryptophan repeat motif motif lies at 994-1010 (WEQWWTDYWQVTWIPEW). The RNase H type-1 domain maps to 1030–1153 (IQGAETFYVD…VDHLVSQGIR (124 aa)). Mg(2+) is bound by residues Asp1039, Glu1074, Asp1094, and Asp1145. An Integrase-type zinc finger spans residues 1159–1200 (EKIEPAQEEHEKYHSNVKELVFKFGLPRLVAKQIVDTCDKCH). Zn(2+) is bound by residues His1168, His1172, Cys1196, and Cys1199. The region spanning 1210 to 1360 (VNAELGTWQM…TPAERLVNMI (151 aa)) is the Integrase catalytic domain. Asp1220 and Asp1272 together coordinate Mg(2+). A DNA-binding region (integrase-type) is located at residues 1379–1426 (FRVYYREGRDQLWKGPGELLWKGEGAVILKVGTEIKVVPRRKAKIIKD).

As to quaternary structure, homotrimer. Interacts with gp41 (via C-terminus). In terms of assembly, homodimer. The active site consists of two apposed aspartic acid residues. Heterodimer of p66 RT and p51 RT (RT p66/p51). Heterodimerization of RT is essential for DNA polymerase activity. Despite the sequence identities, p66 RT and p51 RT have distinct folding. As to quaternary structure, homotetramer; may further associate as a homohexadecamer. Mg(2+) is required as a cofactor. Post-translationally, specific enzymatic cleavages by the viral protease yield mature proteins. The protease is released by autocatalytic cleavage. The polyprotein is cleaved during and after budding, this process is termed maturation. Proteolytic cleavage of p66 RT removes the RNase H domain to yield the p51 RT subunit. In terms of processing, capsid protein p24 is phosphorylated.

Its subcellular location is the virion. The protein resides in the host nucleus. It localises to the host cytoplasm. It is found in the host cell membrane. The catalysed reaction is Specific for a P1 residue that is hydrophobic, and P1' variable, but often Pro.. It carries out the reaction Endohydrolysis of RNA in RNA/DNA hybrids. Three different cleavage modes: 1. sequence-specific internal cleavage of RNA. Human immunodeficiency virus type 1 and Moloney murine leukemia virus enzymes prefer to cleave the RNA strand one nucleotide away from the RNA-DNA junction. 2. RNA 5'-end directed cleavage 13-19 nucleotides from the RNA end. 3. DNA 3'-end directed cleavage 15-20 nucleotides away from the primer terminus.. It catalyses the reaction 3'-end directed exonucleolytic cleavage of viral RNA-DNA hybrid.. The enzyme catalyses DNA(n) + a 2'-deoxyribonucleoside 5'-triphosphate = DNA(n+1) + diphosphate. With respect to regulation, the viral protease is inhibited by many synthetic protease inhibitors (PIs), such as amprenavir, atazanavir, indinavir, loprinavir, nelfinavir, ritonavir and saquinavir. RT can be inhibited either by nucleoside RT inhibitors (NRTIs) or by non nucleoside RT inhibitors (NNRTIs). NRTIs act as chain terminators, whereas NNRTIs inhibit DNA polymerization by binding a small hydrophobic pocket near the RT active site and inducing an allosteric change in this region. Classical NRTIs are abacavir, adefovir (PMEA), didanosine (ddI), lamivudine (3TC), stavudine (d4T), tenofovir (PMPA), zalcitabine (ddC), and zidovudine (AZT). Classical NNRTIs are atevirdine (BHAP U-87201E), delavirdine, efavirenz (DMP-266), emivirine (I-EBU), and nevirapine (BI-RG-587). The tritherapies used as a basic effective treatment of AIDS associate two NRTIs and one NNRTI. Use of protease inhibitors in tritherapy regimens permit more ambitious therapeutic strategies. Its function is as follows. Gag-Pol polyprotein and Gag polyprotein may regulate their own translation, by the binding genomic RNA in the 5'-UTR. At low concentration, Gag-Pol and Gag would promote translation, whereas at high concentration, the polyproteins encapsidate genomic RNA and then shut off translation. Functionally, matrix protein p17 has two main functions: in infected cell, it targets Gag and Gag-pol polyproteins to the plasma membrane via a multipartite membrane-binding signal, that includes its myristointegration complex. The myristoylation signal and the NLS exert conflicting influences its subcellular localization. The key regulation of these motifs might be phosphorylation of a portion of MA molecules on the C-terminal tyrosine at the time of virus maturation, by virion-associated cellular tyrosine kinase. Implicated in the release from host cell mediated by Vpu. Capsid protein p24 forms the conical core that encapsulates the genomic RNA-nucleocapsid complex in the virion. The core is constituted by capsid protein hexamer subunits. The core is disassembled soon after virion entry. Interaction with host PPIA/CYPA protects the virus from restriction by host TRIM5-alpha and from an unknown antiviral activity in host cells. This capsid restriction by TRIM5 is one of the factors which restricts SIV to the simian species. In terms of biological role, nucleocapsid protein p7 encapsulates and protects viral dimeric unspliced (genomic) RNA. Binds these RNAs through its zinc fingers. Facilitates rearangement of nucleic acid secondary structure during retrotranscription of genomic RNA. This capability is referred to as nucleic acid chaperone activity. Its function is as follows. The aspartyl protease mediates proteolytic cleavages of Gag and Gag-Pol polyproteins during or shortly after the release of the virion from the plasma membrane. Cleavages take place as an ordered, step-wise cascade to yield mature proteins. This process is called maturation. Displays maximal activity during the budding process just prior to particle release from the cell. Also cleaves Nef and Vif, probably concomitantly with viral structural proteins on maturation of virus particles. Hydrolyzes host EIF4GI and PABP1 in order to shut off the capped cellular mRNA translation. The resulting inhibition of cellular protein synthesis serves to ensure maximal viral gene expression and to evade host immune response. Functionally, reverse transcriptase/ribonuclease H (RT) is a multifunctional enzyme that converts the viral dimeric RNA genome into dsDNA in the cytoplasm, shortly after virus entry into the cell. This enzyme displays a DNA polymerase activity that can copy either DNA or RNA templates, and a ribonuclease H (RNase H) activity that cleaves the RNA strand of RNA-DNA heteroduplexes in a partially processive 3' to 5' endonucleasic mode. Conversion of viral genomic RNA into dsDNA requires many steps. A tRNA binds to the primer-binding site (PBS) situated at the 5'-end of the viral RNA. RT uses the 3' end of the tRNA primer to perform a short round of RNA-dependent minus-strand DNA synthesis. The reading proceeds through the U5 region and ends after the repeated (R) region which is present at both ends of viral RNA. The portion of the RNA-DNA heteroduplex is digested by the RNase H, resulting in a ssDNA product attached to the tRNA primer. This ssDNA/tRNA hybridizes with the identical R region situated at the 3' end of viral RNA. This template exchange, known as minus-strand DNA strong stop transfer, can be either intra- or intermolecular. RT uses the 3' end of this newly synthesized short ssDNA to perform the RNA-dependent minus-strand DNA synthesis of the whole template. RNase H digests the RNA template except for two polypurine tracts (PPTs) situated at the 5'-end and near the center of the genome. It is not clear if both polymerase and RNase H activities are simultaneous. RNase H can probably proceed both in a polymerase-dependent (RNA cut into small fragments by the same RT performing DNA synthesis) and a polymerase-independent mode (cleavage of remaining RNA fragments by free RTs). Secondly, RT performs DNA-directed plus-strand DNA synthesis using the PPTs that have not been removed by RNase H as primers. PPTs and tRNA primers are then removed by RNase H. The 3' and 5' ssDNA PBS regions hybridize to form a circular dsDNA intermediate. Strand displacement synthesis by RT to the PBS and PPT ends produces a blunt ended, linear dsDNA copy of the viral genome that includes long terminal repeats (LTRs) at both ends. Integrase catalyzes viral DNA integration into the host chromosome, by performing a series of DNA cutting and joining reactions. This enzyme activity takes place after virion entry into a cell and reverse transcription of the RNA genome in dsDNA. The first step in the integration process is 3' processing. This step requires a complex comprising the viral genome, matrix protein, Vpr and integrase. This complex is called the pre-integration complex (PIC). The integrase protein removes 2 nucleotides from each 3' end of the viral DNA, leaving recessed CA OH's at the 3' ends. In the second step, the PIC enters cell nucleus. This process is mediated through integrase and Vpr proteins, and allows the virus to infect a non dividing cell. This ability to enter the nucleus is specific of lentiviruses, other retroviruses cannot and rely on cell division to access cell chromosomes. In the third step, termed strand transfer, the integrase protein joins the previously processed 3' ends to the 5' ends of strands of target cellular DNA at the site of integration. The 5'-ends are produced by integrase-catalyzed staggered cuts, 5 bp apart. A Y-shaped, gapped, recombination intermediate results, with the 5'-ends of the viral DNA strands and the 3' ends of target DNA strands remaining unjoined, flanking a gap of 5 bp. The last step is viral DNA integration into host chromosome. This involves host DNA repair synthesis in which the 5 bp gaps between the unjoined strands are filled in and then ligated. Since this process occurs at both cuts flanking the SIV genome, a 5 bp duplication of host DNA is produced at the ends of SIV integration. Alternatively, Integrase may catalyze the excision of viral DNA just after strand transfer, this is termed disintegration. This chain is Gag-Pol polyprotein (gag-pol), found in Cercopithecidae (Old World monkeys).